The sequence spans 444 residues: Porin AaxA (444 aa).

The N-terminal stretch at 1–19 (MAFSRFYLLTALYTGGILA) is a signal peptide. The interval 42–68 (KNSTQDSDSSPSESSPHPRQEPRRHVL) is disordered. A compositionally biased stretch (low complexity) spans 46–56 (QDSDSSPSESS).

This sequence belongs to the OprB family.

It localises to the cell outer membrane. Functionally, facilitates L-arginine uptake, as part of the AaxABC system. The arginine uptake by the bacterium in the macrophage may be a virulence factor against the host innate immune response. This is Porin AaxA (aaxA) from Chlamydia felis (strain Fe/C-56) (Chlamydophila felis).